We begin with the raw amino-acid sequence, 417 residues long: Serine hydroxymethyltransferase (417 aa).

Residues L121 and 125 to 127 contribute to the (6S)-5,6,7,8-tetrahydrofolate site; that span reads GHL. The residue at position 230 (K230) is an N6-(pyridoxal phosphate)lysine. Residue 355-357 participates in (6S)-5,6,7,8-tetrahydrofolate binding; it reads SPF.

This sequence belongs to the SHMT family. In terms of assembly, homodimer. Pyridoxal 5'-phosphate serves as cofactor.

The protein localises to the cytoplasm. It carries out the reaction (6R)-5,10-methylene-5,6,7,8-tetrahydrofolate + glycine + H2O = (6S)-5,6,7,8-tetrahydrofolate + L-serine. It participates in one-carbon metabolism; tetrahydrofolate interconversion. The protein operates within amino-acid biosynthesis; glycine biosynthesis; glycine from L-serine: step 1/1. In terms of biological role, catalyzes the reversible interconversion of serine and glycine with tetrahydrofolate (THF) serving as the one-carbon carrier. This reaction serves as the major source of one-carbon groups required for the biosynthesis of purines, thymidylate, methionine, and other important biomolecules. Also exhibits THF-independent aldolase activity toward beta-hydroxyamino acids, producing glycine and aldehydes, via a retro-aldol mechanism. The chain is Serine hydroxymethyltransferase from Legionella pneumophila subsp. pneumophila (strain Philadelphia 1 / ATCC 33152 / DSM 7513).